The primary structure comprises 718 residues: DNA ligase (718 aa).

NAD(+) is bound by residues 44–48, 93–94, and Glu-127; these read DADYD and SL. The active-site N6-AMP-lysine intermediate is the Lys-129. Residues Arg-150, Glu-186, Lys-302, and Lys-326 each coordinate NAD(+). 4 residues coordinate Zn(2+): Cys-432, Cys-435, Cys-456, and Cys-462. The region spanning 640 to 718 is the BRCT domain; the sequence is TAGSPVAGKT…EDEWLALISG (79 aa).

Belongs to the NAD-dependent DNA ligase family. LigA subfamily. Requires Mg(2+) as cofactor. It depends on Mn(2+) as a cofactor.

The catalysed reaction is NAD(+) + (deoxyribonucleotide)n-3'-hydroxyl + 5'-phospho-(deoxyribonucleotide)m = (deoxyribonucleotide)n+m + AMP + beta-nicotinamide D-nucleotide.. Its function is as follows. DNA ligase that catalyzes the formation of phosphodiester linkages between 5'-phosphoryl and 3'-hydroxyl groups in double-stranded DNA using NAD as a coenzyme and as the energy source for the reaction. It is essential for DNA replication and repair of damaged DNA. The sequence is that of DNA ligase from Rhizobium etli (strain CIAT 652).